A 266-amino-acid chain; its full sequence is Glucosamine-6-phosphate deaminase (266 aa).

The active-site Proton acceptor; for enolization step is the aspartate 72. Aspartate 141 (for ring-opening step) is an active-site residue. The active-site Proton acceptor; for ring-opening step is histidine 143. Glutamate 148 serves as the catalytic For ring-opening step.

Belongs to the glucosamine/galactosamine-6-phosphate isomerase family. NagB subfamily. As to quaternary structure, homohexamer.

The catalysed reaction is alpha-D-glucosamine 6-phosphate + H2O = beta-D-fructose 6-phosphate + NH4(+). Its pathway is amino-sugar metabolism; N-acetylneuraminate degradation; D-fructose 6-phosphate from N-acetylneuraminate: step 5/5. Allosterically activated by N-acetylglucosamine 6-phosphate (GlcNAc6P). Catalyzes the reversible isomerization-deamination of glucosamine 6-phosphate (GlcN6P) to form fructose 6-phosphate (Fru6P) and ammonium ion. The chain is Glucosamine-6-phosphate deaminase from Citrobacter koseri (strain ATCC BAA-895 / CDC 4225-83 / SGSC4696).